Reading from the N-terminus, the 176-residue chain is Magnesium-dependent phosphatase 1 (176 aa).

The active-site Nucleophile is the aspartate 11. Aspartate 11 is a binding site for Mg(2+). Phosphate-binding residues include leucine 12 and aspartate 13. Aspartate 13 is a binding site for Mg(2+). The active-site Proton donor is the aspartate 13. Tryptophan 20 is a binding site for substrate. Serine 69, arginine 70, and lysine 100 together coordinate phosphate. Substrate is bound at residue arginine 70. Aspartate 123 is a binding site for Mg(2+).

This sequence belongs to the HAD-like hydrolase superfamily. Mg(2+) is required as a cofactor.

It catalyses the reaction O-phospho-L-tyrosyl-[protein] + H2O = L-tyrosyl-[protein] + phosphate. With respect to regulation, inhibited by vanadate and zinc, and slightly by calcium. Functionally, magnesium-dependent phosphatase which may act as a tyrosine phosphatase. The polypeptide is Magnesium-dependent phosphatase 1 (MDP1) (Homo sapiens (Human)).